We begin with the raw amino-acid sequence, 452 residues long: 2-succinylbenzoate--CoA ligase (452 aa).

It belongs to the ATP-dependent AMP-binding enzyme family. MenE subfamily.

The catalysed reaction is 2-succinylbenzoate + ATP + CoA = 2-succinylbenzoyl-CoA + AMP + diphosphate. It functions in the pathway quinol/quinone metabolism; 1,4-dihydroxy-2-naphthoate biosynthesis; 1,4-dihydroxy-2-naphthoate from chorismate: step 5/7. It participates in quinol/quinone metabolism; menaquinone biosynthesis. Converts 2-succinylbenzoate (OSB) to 2-succinylbenzoyl-CoA (OSB-CoA). This is 2-succinylbenzoate--CoA ligase from Haemophilus influenzae (strain ATCC 51907 / DSM 11121 / KW20 / Rd).